The sequence spans 196 residues: Holliday junction branch migration complex subunit RuvA (196 aa).

The interval 1-63 is domain I; that stretch reads MINKIYGKIV…DDDVKLFGFL (63 aa). A domain II region spans residues 64-142; that stretch reads NISEREVFEN…KGDESSSYML (79 aa). A region of interest (flexible linker) is located at residue Lys-143. The interval 143-196 is domain III; the sequence is KFKELEQSIVNMGFDRKLVVVAFREIMLSDKFLILKEAEQEQFLFTETLKRLSV.

This sequence belongs to the RuvA family. As to quaternary structure, homotetramer. Forms an RuvA(8)-RuvB(12)-Holliday junction (HJ) complex. HJ DNA is sandwiched between 2 RuvA tetramers; dsDNA enters through RuvA and exits via RuvB. An RuvB hexamer assembles on each DNA strand where it exits the tetramer. Each RuvB hexamer is contacted by two RuvA subunits (via domain III) on 2 adjacent RuvB subunits; this complex drives branch migration. In the full resolvosome a probable DNA-RuvA(4)-RuvB(12)-RuvC(2) complex forms which resolves the HJ.

It localises to the cytoplasm. In terms of biological role, the RuvA-RuvB-RuvC complex processes Holliday junction (HJ) DNA during genetic recombination and DNA repair, while the RuvA-RuvB complex plays an important role in the rescue of blocked DNA replication forks via replication fork reversal (RFR). RuvA specifically binds to HJ cruciform DNA, conferring on it an open structure. The RuvB hexamer acts as an ATP-dependent pump, pulling dsDNA into and through the RuvAB complex. HJ branch migration allows RuvC to scan DNA until it finds its consensus sequence, where it cleaves and resolves the cruciform DNA. This chain is Holliday junction branch migration complex subunit RuvA, found in Borrelia recurrentis (strain A1).